Here is an 874-residue protein sequence, read N- to C-terminus: Alanine--tRNA ligase (874 aa).

4 residues coordinate Zn(2+): His564, His568, Cys665, and His669.

The protein belongs to the class-II aminoacyl-tRNA synthetase family. The cofactor is Zn(2+).

Its subcellular location is the cytoplasm. The catalysed reaction is tRNA(Ala) + L-alanine + ATP = L-alanyl-tRNA(Ala) + AMP + diphosphate. In terms of biological role, catalyzes the attachment of alanine to tRNA(Ala) in a two-step reaction: alanine is first activated by ATP to form Ala-AMP and then transferred to the acceptor end of tRNA(Ala). Also edits incorrectly charged Ser-tRNA(Ala) and Gly-tRNA(Ala) via its editing domain. This chain is Alanine--tRNA ligase, found in Polaromonas naphthalenivorans (strain CJ2).